The primary structure comprises 240 residues: 6-phosphogluconolactonase (240 aa).

The protein belongs to the glucosamine/galactosamine-6-phosphate isomerase family. 6-phosphogluconolactonase subfamily.

It catalyses the reaction 6-phospho-D-glucono-1,5-lactone + H2O = 6-phospho-D-gluconate + H(+). The protein operates within carbohydrate degradation; pentose phosphate pathway; D-ribulose 5-phosphate from D-glucose 6-phosphate (oxidative stage): step 2/3. Hydrolysis of 6-phosphogluconolactone to 6-phosphogluconate. The sequence is that of 6-phosphogluconolactonase (pgl) from Nostoc sp. (strain PCC 7120 / SAG 25.82 / UTEX 2576).